A 227-amino-acid polypeptide reads, in one-letter code: 2,3-bisphosphoglycerate-dependent phosphoglycerate mutase (227 aa).

Substrate is bound by residues 7 to 14 (RHGLSEWN), 20 to 21 (TG), Arg59, 86 to 89 (ERHY), Lys97, 113 to 114 (RR), and 182 to 183 (GN). His8 acts as the Tele-phosphohistidine intermediate in catalysis. Glu86 serves as the catalytic Proton donor/acceptor.

The protein belongs to the phosphoglycerate mutase family. BPG-dependent PGAM subfamily. In terms of assembly, homodimer.

It carries out the reaction (2R)-2-phosphoglycerate = (2R)-3-phosphoglycerate. It participates in carbohydrate degradation; glycolysis; pyruvate from D-glyceraldehyde 3-phosphate: step 3/5. Functionally, catalyzes the interconversion of 2-phosphoglycerate and 3-phosphoglycerate. In Actinobacillus succinogenes (strain ATCC 55618 / DSM 22257 / CCUG 43843 / 130Z), this protein is 2,3-bisphosphoglycerate-dependent phosphoglycerate mutase.